The primary structure comprises 337 residues: Delta-aminolevulinic acid dehydratase (337 aa).

The active-site Schiff-base intermediate with substrate is K205. The 5-aminolevulinate site is built by R215 and K229. E245 lines the Mg(2+) pocket. The active-site Schiff-base intermediate with substrate is K260. 5-aminolevulinate-binding residues include S286 and Y324.

This sequence belongs to the ALAD family. In terms of assembly, homooctamer; formed by oligomerization of dimers. It depends on Mg(2+) as a cofactor.

It carries out the reaction 2 5-aminolevulinate = porphobilinogen + 2 H2O + H(+). The protein operates within porphyrin-containing compound metabolism; protoporphyrin-IX biosynthesis; coproporphyrinogen-III from 5-aminolevulinate: step 1/4. With respect to regulation, stimulated by magnesium ions. Functionally, catalyzes an early step in the biosynthesis of tetrapyrroles. Binds two molecules of 5-aminolevulinate per subunit, each at a distinct site, and catalyzes their condensation to form porphobilinogen. The sequence is that of Delta-aminolevulinic acid dehydratase (hemB) from Pseudomonas aeruginosa (strain ATCC 15692 / DSM 22644 / CIP 104116 / JCM 14847 / LMG 12228 / 1C / PRS 101 / PAO1).